Consider the following 349-residue polypeptide: Ferredoxin--NADP reductase 1 (349 aa).

Residues Glu36, Lys44, Tyr48, Val88, Leu123, Asp290, and Ser331 each coordinate FAD.

The protein belongs to the ferredoxin--NADP reductase type 2 family. As to quaternary structure, homodimer. FAD serves as cofactor.

The enzyme catalyses 2 reduced [2Fe-2S]-[ferredoxin] + NADP(+) + H(+) = 2 oxidized [2Fe-2S]-[ferredoxin] + NADPH. This chain is Ferredoxin--NADP reductase 1, found in Bacillus cytotoxicus (strain DSM 22905 / CIP 110041 / 391-98 / NVH 391-98).